The following is a 199-amino-acid chain: Superoxide dismutase [Mn/Fe] 2 (199 aa).

The Fe(3+) site is built by His27, His81, Asp161, and His165. Residues His27, His81, Asp161, and His165 each contribute to the Mn(2+) site.

It belongs to the iron/manganese superoxide dismutase family. Homodimer. Can also form a heterodimer with SodA. Mn(2+) serves as cofactor. Requires Fe(3+) as cofactor.

It carries out the reaction 2 superoxide + 2 H(+) = H2O2 + O2. Destroys superoxide anion radicals which are normally produced within the cells and which are toxic to biological systems. Catalyzes the dismutation of superoxide anion radicals into O2 and H2O2 by successive reduction and oxidation of the transition metal ion at the active site. This chain is Superoxide dismutase [Mn/Fe] 2 (sodM), found in Staphylococcus aureus (strain bovine RF122 / ET3-1).